The primary structure comprises 390 residues: cAMP-dependent protein kinase regulatory subunit (390 aa).

Positions 1 to 17 are enriched in polar residues; the sequence is MSASGFTSPFGANSNPF. The disordered stretch occupies residues 1–81; that stretch reads MSASGFTSPF…RPQNPDGYPA (81 aa). The interval 1–129 is dimerization and phosphorylation; the sequence is MSASGFTSPF…RLKKAIQGNF (129 aa). Ser90 carries the post-translational modification Phosphoserine. Residues 130-261, Glu208, Arg217, 262-383, Glu329, and Arg338 contribute to the 3',5'-cyclic AMP site; these read LFSH…EEVP and ILST…GVEE.

Belongs to the cAMP-dependent kinase regulatory chain family. In terms of assembly, tetramer, composed of 2 regulatory (R) and 2 catalytic (C) subunits. In the presence of cAMP it dissociates into 2 active monomeric C subunits and an R dimer.

This chain is cAMP-dependent protein kinase regulatory subunit (SUM1), found in Pyricularia oryzae (strain 70-15 / ATCC MYA-4617 / FGSC 8958) (Rice blast fungus).